Reading from the N-terminus, the 345-residue chain is N-acetyl-gamma-glutamyl-phosphate reductase (345 aa).

Cys149 is a catalytic residue.

Belongs to the NAGSA dehydrogenase family. Type 1 subfamily.

It localises to the cytoplasm. The catalysed reaction is N-acetyl-L-glutamate 5-semialdehyde + phosphate + NADP(+) = N-acetyl-L-glutamyl 5-phosphate + NADPH + H(+). Its pathway is amino-acid biosynthesis; L-arginine biosynthesis; N(2)-acetyl-L-ornithine from L-glutamate: step 3/4. In terms of biological role, catalyzes the NADPH-dependent reduction of N-acetyl-5-glutamyl phosphate to yield N-acetyl-L-glutamate 5-semialdehyde. The sequence is that of N-acetyl-gamma-glutamyl-phosphate reductase from Bacillus cereus (strain AH187).